A 90-amino-acid polypeptide reads, in one-letter code: Putative Fis-like DNA-binding protein (90 aa).

The segment at residues 66-85 (QSRAAALLGIHRATLRKKLK) is a DNA-binding region (H-T-H motif).

This sequence belongs to the transcriptional regulatory Fis family.

The chain is Putative Fis-like DNA-binding protein from Xylella fastidiosa (strain Temecula1 / ATCC 700964).